We begin with the raw amino-acid sequence, 394 residues long: RHOMBOID-like protein 4 (394 aa).

Residues methionine 1–tyrosine 51 are disordered. Residues glycine 39–serine 49 show a composition bias toward polar residues. Transmembrane regions (helical) follow at residues tryptophan 64 to methionine 84, tryptophan 147 to isoleucine 167, phenylalanine 175 to leucine 195, isoleucine 201 to phenylalanine 221, valine 231 to proline 251, aspartate 254 to isoleucine 274, and isoleucine 300 to leucine 320. Serine 206 functions as the Nucleophile in the catalytic mechanism. Histidine 258 acts as the Charge relay system in catalysis.

This sequence belongs to the peptidase S54 family.

It is found in the membrane. The catalysed reaction is Cleaves type-1 transmembrane domains using a catalytic dyad composed of serine and histidine that are contributed by different transmembrane domains.. Its function is as follows. Probable rhomboid-type serine protease that catalyzes intramembrane proteolysis. This is RHOMBOID-like protein 4 from Arabidopsis thaliana (Mouse-ear cress).